The sequence spans 496 residues: Probable G-protein coupled receptor Mth-like 5 (496 aa).

Topologically, residues 1-219 are extracellular; that stretch reads MLVKTLGAHF…SNFLLRKILN (219 aa). N-linked (GlcNAc...) asparagine glycosylation is present at asparagine 82. A helical transmembrane segment spans residues 220–240; the sequence is PIFHGISLVILLVIAIIYFIL. At 241 to 246 the chain is on the cytoplasmic side; the sequence is PTLRDL. A helical transmembrane segment spans residues 247 to 267; sequence VGNIVTTIAMCLMVSQAADLV. Over 268-276 the chain is Extracellular; sequence RIFTELTSH. Residues 277–297 form a helical membrane-spanning segment; it reads VSFIVADIILCFSLLAAFFWL. The Cytoplasmic portion of the chain corresponds to 298-327; that stretch reads NSFGFYIWKTFRSRNVFLRVTDGRKYCYYS. A helical transmembrane segment spans residues 328–348; that stretch reads AYAWGCTATMAALAVFAHFFL. The Extracellular segment spans residues 349-366; it reads DAESYKQEHMVGEQETIG. The helical transmembrane segment at 367-387 threads the bilayer; it reads WLGICIFFAPIACTILVNIFF. At 388–411 the chain is on the cytoplasmic side; it reads YVTTRKLINRRTVYGRIAHKLKAN. A helical membrane pass occupies residues 412 to 432; the sequence is FIMFSLMLLVMSIAWLFLIMS. Residues 433–438 are Extracellular-facing; the sequence is WLQMEG. Residues 439-459 traverse the membrane as a helical segment; sequence LLYAHIVVNALQTPLLLYICV. At 460–496 the chain is on the cytoplasmic side; that stretch reads LRQRHVTFLLKKTCCYNEPPSANDWGDELHYMNGNDY.

Belongs to the G-protein coupled receptor 2 family. Mth subfamily.

It is found in the cell membrane. This is Probable G-protein coupled receptor Mth-like 5 (mthl5) from Drosophila melanogaster (Fruit fly).